A 544-amino-acid chain; its full sequence is Chaperonin GroEL (544 aa).

Residues 30 to 33 (TLGP), lysine 51, 87 to 91 (DGTTT), glycine 415, 479 to 481 (NAA), and aspartate 495 each bind ATP.

It belongs to the chaperonin (HSP60) family. Forms a cylinder of 14 subunits composed of two heptameric rings stacked back-to-back. Interacts with the co-chaperonin GroES.

It is found in the cytoplasm. The catalysed reaction is ATP + H2O + a folded polypeptide = ADP + phosphate + an unfolded polypeptide.. Functionally, together with its co-chaperonin GroES, plays an essential role in assisting protein folding. The GroEL-GroES system forms a nano-cage that allows encapsulation of the non-native substrate proteins and provides a physical environment optimized to promote and accelerate protein folding. The polypeptide is Chaperonin GroEL (Acinetobacter baylyi (strain ATCC 33305 / BD413 / ADP1)).